The following is a 227-amino-acid chain: PKHD-type hydroxylase Bamb_4192 (227 aa).

Residues 78-178 (KVFPPLFNRY…RVASFFWIQS (101 aa)) enclose the Fe2OG dioxygenase domain. The Fe cation site is built by His96, Asp98, and His159. Arg169 provides a ligand contact to 2-oxoglutarate.

The cofactor is Fe(2+). L-ascorbate serves as cofactor.

The chain is PKHD-type hydroxylase Bamb_4192 from Burkholderia ambifaria (strain ATCC BAA-244 / DSM 16087 / CCUG 44356 / LMG 19182 / AMMD) (Burkholderia cepacia (strain AMMD)).